The chain runs to 448 residues: Methylenetetrahydrofolate--tRNA-(uracil-5-)-methyltransferase TrmFO (448 aa).

Residue 13 to 18 (GAGLAG) coordinates FAD.

Belongs to the MnmG family. TrmFO subfamily. FAD serves as cofactor.

Its subcellular location is the cytoplasm. The enzyme catalyses uridine(54) in tRNA + (6R)-5,10-methylene-5,6,7,8-tetrahydrofolate + NADH + H(+) = 5-methyluridine(54) in tRNA + (6S)-5,6,7,8-tetrahydrofolate + NAD(+). The catalysed reaction is uridine(54) in tRNA + (6R)-5,10-methylene-5,6,7,8-tetrahydrofolate + NADPH + H(+) = 5-methyluridine(54) in tRNA + (6S)-5,6,7,8-tetrahydrofolate + NADP(+). In terms of biological role, catalyzes the folate-dependent formation of 5-methyl-uridine at position 54 (M-5-U54) in all tRNAs. This Streptococcus pyogenes serotype M12 (strain MGAS2096) protein is Methylenetetrahydrofolate--tRNA-(uracil-5-)-methyltransferase TrmFO.